A 74-amino-acid polypeptide reads, in one-letter code: Guanine nucleotide-binding protein G(T) subunit gamma-T1 (74 aa).

Cys-71 is subject to Cysteine methyl ester. Cys-71 is lipidated: S-farnesyl cysteine. Positions 72-74 are cleaved as a propeptide — removed in mature form; it reads VIS.

The protein belongs to the G protein gamma family. As to quaternary structure, g proteins are composed of 3 units, alpha, beta and gamma. In terms of tissue distribution, retinal rod outer segment.

It localises to the cell membrane. In terms of biological role, guanine nucleotide-binding proteins (G proteins) are involved as a modulator or transducer in various transmembrane signaling systems. The beta and gamma chains are required for the GTPase activity, for replacement of GDP by GTP, and for G protein-effector interaction. The chain is Guanine nucleotide-binding protein G(T) subunit gamma-T1 (GNGT1) from Canis lupus familiaris (Dog).